A 60-amino-acid polypeptide reads, in one-letter code: MAVPRNRHSNARKNIRRSHDAKKACHAAKCSNCKHALLPHTICPSCGFYNGKAVMTVEKK.

The segment covering methionine 1–arginine 16 has biased composition (basic residues). A disordered region spans residues methionine 1–aspartate 20.

This sequence belongs to the bacterial ribosomal protein bL32 family.

This chain is Large ribosomal subunit protein bL32 (rpmF), found in Chlamydia pneumoniae (Chlamydophila pneumoniae).